The chain runs to 262 residues: Small ribosomal subunit protein uS2 (262 aa).

Belongs to the universal ribosomal protein uS2 family.

The sequence is that of Small ribosomal subunit protein uS2 from Borreliella burgdorferi (strain ZS7) (Borrelia burgdorferi).